We begin with the raw amino-acid sequence, 62 residues long: Photosystem II reaction center protein Z (62 aa).

A run of 2 helical transmembrane segments spans residues Ala8 to Ala28 and Phe41 to Ile61.

Belongs to the PsbZ family. PSII is composed of 1 copy each of membrane proteins PsbA, PsbB, PsbC, PsbD, PsbE, PsbF, PsbH, PsbI, PsbJ, PsbK, PsbL, PsbM, PsbT, PsbY, PsbZ, Psb30/Ycf12, at least 3 peripheral proteins of the oxygen-evolving complex and a large number of cofactors. It forms dimeric complexes.

It is found in the plastid. It localises to the chloroplast thylakoid membrane. Its function is as follows. May control the interaction of photosystem II (PSII) cores with the light-harvesting antenna, regulates electron flow through the 2 photosystem reaction centers. PSII is a light-driven water plastoquinone oxidoreductase, using light energy to abstract electrons from H(2)O, generating a proton gradient subsequently used for ATP formation. This is Photosystem II reaction center protein Z from Calycanthus floridus var. glaucus (Eastern sweetshrub).